A 180-amino-acid chain; its full sequence is Large ribosomal subunit protein uL5c (180 aa).

Belongs to the universal ribosomal protein uL5 family. Part of the 50S ribosomal subunit; contacts the 5S rRNA.

It localises to the plastid. The protein resides in the chloroplast. Functionally, binds 5S rRNA, forms part of the central protuberance of the 50S subunit. This is Large ribosomal subunit protein uL5c (rpl5) from Chlorella vulgaris (Green alga).